The sequence spans 56 residues: Large ribosomal subunit protein bL32 (56 aa).

The tract at residues 1–37 (MAVQQNKPTRSKRGMRRSHDALTAPLLSVDKTSGETH) is disordered.

The protein belongs to the bacterial ribosomal protein bL32 family.

In Photorhabdus laumondii subsp. laumondii (strain DSM 15139 / CIP 105565 / TT01) (Photorhabdus luminescens subsp. laumondii), this protein is Large ribosomal subunit protein bL32.